A 226-amino-acid chain; its full sequence is Cytidylate kinase (226 aa).

10-18 is a binding site for ATP; that stretch reads GPASSGKST.

The protein belongs to the cytidylate kinase family. Type 1 subfamily.

It is found in the cytoplasm. It catalyses the reaction CMP + ATP = CDP + ADP. It carries out the reaction dCMP + ATP = dCDP + ADP. The protein is Cytidylate kinase of Streptococcus equi subsp. equi (strain 4047).